Reading from the N-terminus, the 251-residue chain is uncharacterized protein (251 aa).

An N-terminal signal peptide occupies residues 1-15; the sequence is MSAISSLVLIGWAMC. Residues asparagine 225 and asparagine 242 are each glycosylated (N-linked (GlcNAc...) asparagine).

This is an uncharacterized protein from Encephalitozoon cuniculi (strain GB-M1) (Microsporidian parasite).